A 248-amino-acid chain; its full sequence is Trypsin II-P29 (248 aa).

Positions 1–16 (MKFLFLILSCLGAAVA) are cleaved as a signal peptide. The propeptide at 17–25 (FPGGADDDK) is activation peptide. Residues 26 to 246 (IVGGYTCPEH…YVDWIQETIA (221 aa)) form the Peptidase S1 domain. Disulfide bonds link Cys-32–Cys-162, Cys-50–Cys-66, Cys-134–Cys-235, Cys-141–Cys-208, Cys-173–Cys-187, and Cys-198–Cys-222. Residue His-65 is the Charge relay system of the active site. 4 residues coordinate Ca(2+): Glu-77, Asn-79, Val-82, and Glu-87. Asp-109 serves as the catalytic Charge relay system. The Charge relay system role is filled by Ser-202.

This sequence belongs to the peptidase S1 family. Ca(2+) serves as cofactor. High levels are seen in the pancreas while lower levels are found in the liver, spleen and thymus.

It is found in the secreted. It localises to the extracellular space. It catalyses the reaction Preferential cleavage: Arg-|-Xaa, Lys-|-Xaa.. In Gallus gallus (Chicken), this protein is Trypsin II-P29.